A 597-amino-acid chain; its full sequence is Protein IQ-DOMAIN 29 (597 aa).

A disordered region spans residues methionine 1 to leucine 31. IQ domains follow at residues leucine 106–arginine 134, valine 135–serine 153, and glycine 157–asparagine 183. Positions valine 159–serine 173 are calmodulin-binding. The short motif at lysine 264–valine 271 is the Nuclear localization signal 1 element. Disordered stretches follow at residues phenylalanine 268–isoleucine 379 and leucine 407–arginine 597. Residues serine 289–threonine 300 show a composition bias toward low complexity. Residues glutamate 319–lysine 329 show a composition bias toward basic and acidic residues. Positions histidine 356–asparagine 363 match the Nuclear localization signal 2 motif. The span at lysine 414–glutamate 463 shows a compositional bias: basic and acidic residues. Over residues glutamine 467–threonine 480 the composition is skewed to polar residues. Over residues lysine 481–aspartate 500 the composition is skewed to basic and acidic residues. The segment covering glycine 572 to lysine 584 has biased composition (polar residues). The span at aspartate 585–arginine 597 shows a compositional bias: basic and acidic residues.

It belongs to the IQD family. In terms of assembly, binds to multiple calmodulin (CaM) in the presence of Ca(2+) and CaM-like proteins.

The protein localises to the nucleus. Its subcellular location is the nucleus envelope. It is found in the cytoplasm. The protein resides in the cytoskeleton. It localises to the cell membrane. May be involved in cooperative interactions with calmodulins or calmodulin-like proteins. Recruits calmodulin proteins to microtubules, thus being a potential scaffold in cellular signaling and trafficking. May associate with nucleic acids and regulate gene expression at the transcriptional or post-transcriptional level. This is Protein IQ-DOMAIN 29 from Arabidopsis thaliana (Mouse-ear cress).